A 146-amino-acid chain; its full sequence is MSHKILLVNGPNLNLLGRREPSVYGHQTLADIVAELNQQAKLAEVELEHIQSNAEFELINAIHATDAQMIIINPAAFTHTSVALRDALLGVAIPFFEVHLSNVHAREAFRHHSYFSDKAIGVICGFGSQGYEFALAAAIKRLNQPL.

Residue Y24 is the Proton acceptor of the active site. Substrate contacts are provided by N73, H79, and D86. H99 acts as the Proton donor in catalysis. Substrate contacts are provided by residues 100 to 101 (LS) and R110.

This sequence belongs to the type-II 3-dehydroquinase family. Homododecamer.

It carries out the reaction 3-dehydroquinate = 3-dehydroshikimate + H2O. It functions in the pathway metabolic intermediate biosynthesis; chorismate biosynthesis; chorismate from D-erythrose 4-phosphate and phosphoenolpyruvate: step 3/7. Catalyzes a trans-dehydration via an enolate intermediate. This Shewanella baltica (strain OS195) protein is 3-dehydroquinate dehydratase.